The chain runs to 159 residues: Small ribosomal subunit protein uS9 (159 aa).

It belongs to the universal ribosomal protein uS9 family.

This is Small ribosomal subunit protein uS9 from Rickettsia conorii (strain ATCC VR-613 / Malish 7).